Reading from the N-terminus, the 53-residue chain is Conotoxin Bu27 (53 aa).

Positions 1–12 (ASDGRNAVVHER) are excised as a propeptide. The residue at position 14 (P14) is a 4-hydroxyproline. E15 carries the 4-carboxyglutamate modification. Residues T19 and T21 are each glycosylated (O-linked (HexNAc...) threonine). 6 positions are modified to 4-hydroxyproline: P29, P34, P35, P43, P44, and P48. The residue at position 48 (P48) is a Proline amide. A propeptide spanning residues 49–53 (GRRND) is cleaved from the precursor.

The protein belongs to the conotoxin A superfamily. Contains 3 disulfide bonds. Expressed by the venom duct.

The protein resides in the secreted. In terms of biological role, probable neurotoxin with ion channel inhibitor activity. In Conus bullatus (Bubble cone), this protein is Conotoxin Bu27.